Consider the following 817-residue polypeptide: Probable beta-glucosidase G (817 aa).

The first 20 residues, methionine 1 to glycine 20, serve as a signal peptide directing secretion. 4 N-linked (GlcNAc...) asparagine glycosylation sites follow: asparagine 40, asparagine 58, asparagine 229, and asparagine 276. Aspartate 304 is an active-site residue. Asparagine 343, asparagine 350, asparagine 402, asparagine 507, asparagine 563, asparagine 584, asparagine 623, asparagine 662, asparagine 679, and asparagine 715 each carry an N-linked (GlcNAc...) asparagine glycan.

This sequence belongs to the glycosyl hydrolase 3 family.

The protein localises to the secreted. The enzyme catalyses Hydrolysis of terminal, non-reducing beta-D-glucosyl residues with release of beta-D-glucose.. Its pathway is glycan metabolism; cellulose degradation. In terms of biological role, beta-glucosidases are one of a number of cellulolytic enzymes involved in the degradation of cellulosic biomass. Catalyzes the last step releasing glucose from the inhibitory cellobiose. This is Probable beta-glucosidase G (bglG) from Aspergillus terreus (strain NIH 2624 / FGSC A1156).